A 256-amino-acid chain; its full sequence is Hydroxyacylglutathione hydrolase (256 aa).

Histidine 58, histidine 60, aspartate 62, histidine 63, histidine 116, aspartate 135, and histidine 173 together coordinate Zn(2+).

It belongs to the metallo-beta-lactamase superfamily. Glyoxalase II family. As to quaternary structure, monomer. It depends on Zn(2+) as a cofactor.

It carries out the reaction an S-(2-hydroxyacyl)glutathione + H2O = a 2-hydroxy carboxylate + glutathione + H(+). It participates in secondary metabolite metabolism; methylglyoxal degradation; (R)-lactate from methylglyoxal: step 2/2. In terms of biological role, thiolesterase that catalyzes the hydrolysis of S-D-lactoyl-glutathione to form glutathione and D-lactic acid. The polypeptide is Hydroxyacylglutathione hydrolase (Hyphomonas neptunium (strain ATCC 15444)).